The primary structure comprises 390 residues: Altered inheritance of mitochondria protein 6 (390 aa).

Positions 1–17 (MLGLKGCLTILIGYVIA) are cleaved as a signal peptide.

The protein belongs to the AIM6 family.

This is Altered inheritance of mitochondria protein 6 from Saccharomyces cerevisiae (strain ATCC 204508 / S288c) (Baker's yeast).